A 105-amino-acid chain; its full sequence is UPF0145 protein GK1405 (105 aa).

It belongs to the UPF0145 family.

In Geobacillus kaustophilus (strain HTA426), this protein is UPF0145 protein GK1405.